The primary structure comprises 189 residues: Peptidyl-tRNA hydrolase (189 aa).

Tyrosine 15 serves as a coordination point for tRNA. Residue histidine 20 is the Proton acceptor of the active site. The tRNA site is built by tyrosine 67, asparagine 69, and asparagine 115.

It belongs to the PTH family. As to quaternary structure, monomer.

It localises to the cytoplasm. It catalyses the reaction an N-acyl-L-alpha-aminoacyl-tRNA + H2O = an N-acyl-L-amino acid + a tRNA + H(+). Its function is as follows. Hydrolyzes ribosome-free peptidyl-tRNAs (with 1 or more amino acids incorporated), which drop off the ribosome during protein synthesis, or as a result of ribosome stalling. In terms of biological role, catalyzes the release of premature peptidyl moieties from peptidyl-tRNA molecules trapped in stalled 50S ribosomal subunits, and thus maintains levels of free tRNAs and 50S ribosomes. This chain is Peptidyl-tRNA hydrolase, found in Symbiobacterium thermophilum (strain DSM 24528 / JCM 14929 / IAM 14863 / T).